The following is a 1663-amino-acid chain: Cortactin-binding protein 2 (1663 aa).

Disordered regions lie at residues 1–23, 203–222, 358–440, 454–479, and 498–616; these read MATDGASCEPDLSRAPEDAAGAA, KKKTNELEEELSAEKRRSTE, RQAS…LHPG, GNANDPDQNGNTTQSPPSRDMSPTSR, and RFTS…PKPS. Residues 119–276 adopt a coiled-coil conformation; that stretch reads KKMQERMSAQ…EQLKRGSDSK (158 aa). Residues 386-396 are compositionally biased toward low complexity; that stretch reads PSTDSTPDPTS. Positions 411–422 are enriched in polar residues; it reads QTPGIAPQNSQA. An Asymmetric dimethylarginine modification is found at arginine 498. Residues 583 to 597 are compositionally biased toward polar residues; sequence TVASPPSSLPQGNRV. ANK repeat units lie at residues 709–739, 743–772, 776–805, 809–838, 842–871, and 912–942; these read GRPTLLQQAAAQGNVTLLSMLLNEEGLDINY, DGHSALYSAAKNGHTDCVRLLLSAEAQINA, NGFTPLCAAAAQGHFECVELLIAYDANINH, GGQTPLYLACKNENKECIKLLLEAGTNRSV, DGWTPVHAAVDTGNVDSLKLLMYHRIPACG, and EGWTAAHIAASKGFKNCLEILCRHGGLEPER. A disordered region spans residues 1447–1477; the sequence is KKKGESGAWRKVNTSPRRKSGRFSLPTWNKP. Position 1524 is a phosphoserine (serine 1524). Disordered regions lie at residues 1581 to 1602 and 1618 to 1663; these read QKEVSPLSSHQTTECSNSKSKT and SKVT…KHNK. Residues 1582-1599 are compositionally biased toward polar residues; that stretch reads KEVSPLSSHQTTECSNSK. Positions 1624–1638 are enriched in low complexity; it reads SQNTKRSSSSSNTRQ. Residues 1645–1663 show a composition bias toward basic and acidic residues; sequence SKEENWNLHKNEHLDKHNK.

In terms of assembly, interacts with CTTN/cortactin SH3 domain. Interacts with STRN, STRN4/zinedin and MOB4/phocein; this interactions mediate the association with the STRIPAK core complex and may regulate dendritic spine distribution of the STRIPAK complex in hippocampal neurons. Activation of glutamate receptors weakens the interaction with STRN and STRN4.

It is found in the cytoplasm. It localises to the cell cortex. Its subcellular location is the cell projection. The protein resides in the dendritic spine. Regulates the dendritic spine distribution of CTTN/cortactin in hippocampal neurons, and thus controls dendritic spinogenesis and dendritic spine maintenance. Associates with the striatin-interacting phosphatase and kinase (STRIPAK) core complex to regulate dendritic spine distribution of the STRIPAK complex in hippocampal neurons. This is Cortactin-binding protein 2 (CTTNBP2) from Papio anubis (Olive baboon).